A 403-amino-acid polypeptide reads, in one-letter code: Aminomethyltransferase, mitochondrial (403 aa).

The N-terminal 28 residues, 1–28, are a transit peptide targeting the mitochondrion; the sequence is MHRIVSVVAPLGFRLQAQPLVQSRPLSS. Residues Glu-232 and Arg-261 each contribute to the substrate site. Lys-368 carries the N6-succinyllysine modification. Tyr-399 is a binding site for substrate.

This sequence belongs to the GcvT family. In terms of assembly, the glycine cleavage system is composed of four proteins: P, T, L and H.

The protein resides in the mitochondrion. It catalyses the reaction N(6)-[(R)-S(8)-aminomethyldihydrolipoyl]-L-lysyl-[protein] + (6S)-5,6,7,8-tetrahydrofolate = N(6)-[(R)-dihydrolipoyl]-L-lysyl-[protein] + (6R)-5,10-methylene-5,6,7,8-tetrahydrofolate + NH4(+). In terms of biological role, the glycine cleavage system catalyzes the degradation of glycine. This chain is Aminomethyltransferase, mitochondrial, found in Mus musculus (Mouse).